A 749-amino-acid chain; its full sequence is Triacylglycerol lipase 5 (749 aa).

An HXXXXD acyltransferase motif motif is present at residues 54-59; the sequence is HAISYD. A PNPLA domain is found at 183 to 388; sequence LVLSGGSTFG…DNDMPISRLS (206 aa). The GXSXG signature appears at 214–218; it reads GSSAG. The active-site Nucleophile is the serine 216. N-linked (GlcNAc...) asparagine glycosylation is found at asparagine 270, asparagine 289, asparagine 297, asparagine 304, and asparagine 321. Aspartate 375 serves as the catalytic Proton acceptor. Residues asparagine 474 and asparagine 589 are each glycosylated (N-linked (GlcNAc...) asparagine). Positions 585-643 are disordered; it reads IKSPNKTAAPGRFPLQPLPSPSSTFNKRKMDMLSPSPSPSTSPQRSKSSFTQQGTRQKA. Residues 623 to 633 are compositionally biased toward low complexity; that stretch reads PSTSPQRSKSS. The segment covering 634-643 has biased composition (polar residues); that stretch reads FTQQGTRQKA. Serine 645 is subject to Phosphoserine. N-linked (GlcNAc...) asparagine glycosylation is found at asparagine 680, asparagine 714, and asparagine 742.

It localises to the lipid droplet. It carries out the reaction a triacylglycerol + H2O = a diacylglycerol + a fatty acid + H(+). The catalysed reaction is 1-(9Z-octadecenoyl)-sn-glycero-3-phosphate + (9Z)-octadecenoyl-CoA = 1,2-di-(9Z-octadecenoyl)-sn-glycero-3-phosphate + CoA. The enzyme catalyses 1-(9Z-octadecenoyl)-sn-glycero-3-phosphate + hexadecanoyl-CoA = 1-hexadecanoyl-2-(9Z-octadecenoyl)-sn-glycero-3-phosphate + CoA. With respect to regulation, loses its lipolytic activity in cells lacking nonpolar lipids, but retains its side activity as lysophospholipid acyltransferase. Lipid particle-localized triacylglycerol (TAG) lipase. The lipid droplet/particle is a lipid storage compartment which serves as a depot of energy and building blocks for membrane lipid biosynthesis. Involved in the mobilization of the non-polar storage lipids triacylglycerols (TAGs) from lipid particles by hydrolysis of TAGs, releasing and supplying specific fatty acids to the appropriate metabolic pathways. Also catalyzes the acylation of lysophosphatidic acid (LPA). This is Triacylglycerol lipase 5 (TGL5) from Saccharomyces cerevisiae (strain ATCC 204508 / S288c) (Baker's yeast).